The chain runs to 101 residues: ATP synthase subunit c (101 aa).

2 helical membrane-spanning segments follow: residues 28 to 48 (SVVAAGVGLGLAALGGAVGMG) and 72 to 92 (MFIALAMIEAQVIYTLVIALI).

It belongs to the ATPase C chain family. F-type ATPases have 2 components, F(1) - the catalytic core - and F(0) - the membrane proton channel. F(1) has five subunits: alpha(3), beta(3), gamma(1), delta(1), epsilon(1). F(0) has three main subunits: a(1), b(2) and c(10-14). The alpha and beta chains form an alternating ring which encloses part of the gamma chain. F(1) is attached to F(0) by a central stalk formed by the gamma and epsilon chains, while a peripheral stalk is formed by the delta and b chains.

It localises to the cell inner membrane. F(1)F(0) ATP synthase produces ATP from ADP in the presence of a proton or sodium gradient. F-type ATPases consist of two structural domains, F(1) containing the extramembraneous catalytic core and F(0) containing the membrane proton channel, linked together by a central stalk and a peripheral stalk. During catalysis, ATP synthesis in the catalytic domain of F(1) is coupled via a rotary mechanism of the central stalk subunits to proton translocation. Functionally, key component of the F(0) channel; it plays a direct role in translocation across the membrane. A homomeric c-ring of between 10-14 subunits forms the central stalk rotor element with the F(1) delta and epsilon subunits. The sequence is that of ATP synthase subunit c from Sulfurovum sp. (strain NBC37-1).